Here is a 338-residue protein sequence, read N- to C-terminus: Anthranilate phosphoribosyltransferase (338 aa).

Residues Gly81, 84–85, Thr89, 91–94, 109–117, and Ser121 contribute to the 5-phospho-alpha-D-ribose 1-diphosphate site; these read GD, NIST, and KHGNRGVSS. Anthranilate is bound at residue Gly81. Ser93 is a binding site for Mg(2+). Asn112 contacts anthranilate. Arg167 is an anthranilate binding site. 2 residues coordinate Mg(2+): Asp225 and Glu226.

Belongs to the anthranilate phosphoribosyltransferase family. In terms of assembly, homodimer. Mg(2+) is required as a cofactor.

The enzyme catalyses N-(5-phospho-beta-D-ribosyl)anthranilate + diphosphate = 5-phospho-alpha-D-ribose 1-diphosphate + anthranilate. Its pathway is amino-acid biosynthesis; L-tryptophan biosynthesis; L-tryptophan from chorismate: step 2/5. In terms of biological role, catalyzes the transfer of the phosphoribosyl group of 5-phosphorylribose-1-pyrophosphate (PRPP) to anthranilate to yield N-(5'-phosphoribosyl)-anthranilate (PRA). This Methanoculleus marisnigri (strain ATCC 35101 / DSM 1498 / JR1) protein is Anthranilate phosphoribosyltransferase.